The primary structure comprises 390 residues: MPHTAKILLLGSGELGREFVISAKRLGAYVVACDAYAAAPAMQVADASEVLSMLDADALRAVVAKHHPDYVVPEIEAIRTEVLAEIEADGFNVVPSAYATQMTMNRDAIRDLAAQELGITTSRYRYAKNLEEVRAAAEFTGYPCVIKPVMSSSGKGQSTVRSADKLEEAWDYAVANMRGDRKRVIVEQFIDFDYEITLLTVRHKDGITFCPPIGHRQERGDYRESWQPATMSKPAIAAAQEMAEKVVTALQGNGKGFGLFGVEFFVKGEEVIFSELSPRPHDTGMVTSVSQNLSEFDLHARAIMGLHVPSEILARPSASAVILAEQESETVSYSGLAAAMEGGADIRIFGKPNTRPYRRMGVALATGGDTDYARTAAVAAANKLHIHYGD.

Residues 14–15 (EL) and glutamate 74 each bind N(1)-(5-phospho-beta-D-ribosyl)glycinamide. Residues arginine 106, lysine 147, 152-157 (SSGKGQ), 187-190 (EQFI), and glutamate 195 each bind ATP. The 194-residue stretch at 111 to 304 (DLAAQELGIT…EFDLHARAIM (194 aa)) folds into the ATP-grasp domain. The Mg(2+) site is built by glutamate 263 and glutamate 275. N(1)-(5-phospho-beta-D-ribosyl)glycinamide contacts are provided by residues aspartate 282, lysine 351, and 358-359 (RR).

The protein belongs to the PurK/PurT family. Homodimer.

It catalyses the reaction N(1)-(5-phospho-beta-D-ribosyl)glycinamide + formate + ATP = N(2)-formyl-N(1)-(5-phospho-beta-D-ribosyl)glycinamide + ADP + phosphate + H(+). The protein operates within purine metabolism; IMP biosynthesis via de novo pathway; N(2)-formyl-N(1)-(5-phospho-D-ribosyl)glycinamide from N(1)-(5-phospho-D-ribosyl)glycinamide (formate route): step 1/1. Its function is as follows. Involved in the de novo purine biosynthesis. Catalyzes the transfer of formate to 5-phospho-ribosyl-glycinamide (GAR), producing 5-phospho-ribosyl-N-formylglycinamide (FGAR). Formate is provided by PurU via hydrolysis of 10-formyl-tetrahydrofolate. This is Formate-dependent phosphoribosylglycinamide formyltransferase from Erythrobacter litoralis (strain HTCC2594).